The chain runs to 152 residues: Dimethylsulfoniopropionate lyase DddW (152 aa).

The Cupin type-2 domain maps to 69 to 124; sequence IAEFGPGHQLRPHRHTPPEFYLGLEGSGIVTIDGVPHEIRAGVALYIPGDAEHGTV. 4 residues coordinate Fe cation: His83, Glu87, Tyr89, and His121.

It belongs to the non-heme iron-dependent dioxygenase family. As to quaternary structure, homodimer. It depends on Fe(2+) as a cofactor.

The enzyme catalyses S,S-dimethyl-beta-propiothetin = acrylate + dimethyl sulfide + H(+). Its function is as follows. Able to cleave dimethylsulfoniopropionate (DMSP), releasing dimethyl sulfide (DMS) and acrylate. DMS is the principal form by which sulfur is transported from oceans to the atmosphere. The sequence is that of Dimethylsulfoniopropionate lyase DddW from Ruegeria pomeroyi (strain ATCC 700808 / DSM 15171 / DSS-3) (Silicibacter pomeroyi).